The primary structure comprises 270 residues: Chymotrypsin-like elastase family member 3B (270 aa).

Positions 1–15 (MMLRLLSSLLLVAVA) form a signal peptide, or 16. A propeptide spans 16-28 (SGYGPPSSRPSSR) (activation peptide). One can recognise a Peptidase S1 domain in the interval 29–268 (VVNGEDAVPY…FIDWIEETIA (240 aa)). The cysteines at positions 58 and 74 are disulfide-linked. Catalysis depends on H73, which acts as the Charge relay system. A glycan (N-linked (GlcNAc...) asparagine) is linked at N114. A disulfide bond links C117 and C120. D123 serves as the catalytic Charge relay system. Disulfide bonds link C157–C223, C188–C204, and C213–C244. S217 serves as the catalytic Charge relay system.

It belongs to the peptidase S1 family. Elastase subfamily. Pancreas. Not detectable in keratinocytes.

It catalyses the reaction Preferential cleavage: Ala-|-Xaa. Does not hydrolyze elastin.. Functionally, efficient protease with alanine specificity but only little elastolytic activity. This Homo sapiens (Human) protein is Chymotrypsin-like elastase family member 3B (CELA3B).